The following is a 334-amino-acid chain: Nucleoid-associated protein VS_0951 (334 aa).

This sequence belongs to the YejK family.

It is found in the cytoplasm. The protein resides in the nucleoid. The sequence is that of Nucleoid-associated protein VS_0951 from Vibrio atlanticus (strain LGP32) (Vibrio splendidus (strain Mel32)).